Consider the following 606-residue polypeptide: Gastrula zinc finger protein XlCGF66.1 (606 aa).

2 disordered regions span residues 1–31 and 240–271; these read MGMWEEASDTGMKGKKKKKDKNEEEEERGKK and TLHSKDSCNEGHKHLSHKSDYNKHQNPHKRQK. Residues 242-262 are compositionally biased toward basic and acidic residues; it reads HSKDSCNEGHKHLSHKSDYNK. C2H2-type zinc fingers lie at residues 273–295, 300–322, 328–350, 384–407, 413–435, 441–464, 470–492, 498–521, 527–549, 555–578, and 584–606; these read FSCSKCGKCFSNLTSLHCHQKTH, LLCLKCGKCFATSSKLIIHRQTH, FSCSECRICFSKQSSLARHQITH, DFCSECGKCFATSSQLIAHQQQVH, FSCTKCGKCFSYRSRLVRHQRTH, YSCSECGKCFASSSHLIGHRQQVH, FFCSECGKYFLYQSQLVRHQRTH, YSCSECGKCFATSSQLMAHQQQVH, FSCSECGKYFLYRAHLVRHQRTH, DFCFECGKCFATSLQLIAHQQQVH, and FSCSECGKSFLYRSHLARHHRTH.

The protein belongs to the krueppel C2H2-type zinc-finger protein family.

The protein resides in the nucleus. Its function is as follows. May be involved in transcriptional regulation. This is Gastrula zinc finger protein XlCGF66.1 from Xenopus laevis (African clawed frog).